The primary structure comprises 240 residues: Sugar fermentation stimulation protein homolog (240 aa).

The protein belongs to the SfsA family.

The sequence is that of Sugar fermentation stimulation protein homolog from Methanothermobacter thermautotrophicus (strain ATCC 29096 / DSM 1053 / JCM 10044 / NBRC 100330 / Delta H) (Methanobacterium thermoautotrophicum).